A 112-amino-acid chain; its full sequence is Cytochrome c type-1 (112 aa).

Positions 20, 23, 24, and 85 each coordinate heme c.

Post-translationally, binds 1 heme c group covalently per subunit.

The protein resides in the mitochondrion intermembrane space. In terms of biological role, electron carrier between complex III (ubiquinol-cytochrome c oxireductase) and complex IV (cytochrome c oxidase). The chain is Cytochrome c type-1 from Ascaris suum (Pig roundworm).